A 181-amino-acid chain; its full sequence is Transcription termination/antitermination protein NusG (181 aa).

The KOW domain maps to 130–161; sequence PGELVRVSDGPFADFNGVVEEVDYEKSRLKVS.

Belongs to the NusG family. Monomer. Interacts with the transcription termination factor Rho and with RNA polymerase.

Functionally, participates in transcription elongation, termination and antitermination. In the absence of Rho, increases the rate of transcription elongation by the RNA polymerase (RNAP), probably by partially suppressing pausing. In the presence of Rho, modulates most Rho-dependent termination events by interacting with the RNAP to render the complex more susceptible to the termination activity of Rho. May be required to overcome a kinetic limitation of Rho to function at certain terminators. Also involved in ribosomal RNA transcriptional antitermination. The polypeptide is Transcription termination/antitermination protein NusG (Yersinia pestis).